Reading from the N-terminus, the 939-residue chain is AP-2 complex subunit alpha-2 (939 aa).

A 1,2-diacyl-sn-glycero-3-phospho-(1D-myo-inositol-3,4,5-trisphosphate)-binding positions include Arg11–Gly12, Lys43, Tyr53, and Lys57–Lys61. The tract at residues Leu612–Ser681 is disordered. The span at Pro646–Ala667 shows a compositional bias: low complexity. The segment covering Pro668–Ser677 has biased composition (pro residues).

This sequence belongs to the adaptor complexes large subunit family. In terms of assembly, adaptor protein complex 2 (AP-2) is a heterotetramer composed of two large adaptins (alpha-type subunit AP2A1 or AP2A2 and beta-type subunit AP2B1), a medium adaptin (mu-type subunit AP2M1) and a small adaptin (sigma-type subunit AP2S1). Binds EPN1, EPS15, AMPH, SNAP91 and BIN1. Interacts with HIP1. Interacts with DGKD. Interacts with DENND1A, DENND1B and DENND1C. Interacts with FCHO1 and DAB2. Interacts with ATAT1; this interaction is required for efficient alpha-tubulin acetylation by ATAT1. Interacts with KIAA1107. Together with AP2B1 and AP2M1, it interacts with ADAM10; this interaction facilitates ADAM10 endocytosis from the plasma membrane during long-term potentiation in hippocampal neurons. Interacts with CLN3 (via dileucine motif). Interacts with ABCB11; this interaction regulates cell membrane expression of ABCB11 through its internalization in a clathrin-dependent manner and its subsequent degradation. Interacts with Cacfd1. Interacts with DNAJC6. As to expression, expressed in the brain (at protein level).

It localises to the cell membrane. Its subcellular location is the membrane. It is found in the coated pit. Functionally, component of the adaptor protein complex 2 (AP-2). Adaptor protein complexes function in protein transport via transport vesicles in different membrane traffic pathways. Adaptor protein complexes are vesicle coat components and appear to be involved in cargo selection and vesicle formation. AP-2 is involved in clathrin-dependent endocytosis in which cargo proteins are incorporated into vesicles surrounded by clathrin (clathrin-coated vesicles, CCVs) which are destined for fusion with the early endosome. The clathrin lattice serves as a mechanical scaffold but is itself unable to bind directly to membrane components. Clathrin-associated adaptor protein (AP) complexes which can bind directly to both the clathrin lattice and to the lipid and protein components of membranes are considered to be the major clathrin adaptors contributing the CCV formation. AP-2 also serves as a cargo receptor to selectively sort the membrane proteins involved in receptor-mediated endocytosis. AP-2 seems to play a role in the recycling of synaptic vesicle membranes from the presynaptic surface. AP-2 recognizes Y-X-X-[FILMV] (Y-X-X-Phi) and [ED]-X-X-X-L-[LI] endocytosis signal motifs within the cytosolic tails of transmembrane cargo molecules. AP-2 may also play a role in maintaining normal post-endocytic trafficking through the ARF6-regulated, non-clathrin pathway. During long-term potentiation in hippocampal neurons, AP-2 is responsible for the endocytosis of ADAM10. The AP-2 alpha subunit binds polyphosphoinositide-containing lipids, positioning AP-2 on the membrane. The AP-2 alpha subunit acts via its C-terminal appendage domain as a scaffolding platform for endocytic accessory proteins. The AP-2 alpha and AP-2 sigma subunits are thought to contribute to the recognition of the [ED]-X-X-X-L-[LI] motif. The chain is AP-2 complex subunit alpha-2 (AP2A2) from Homo sapiens (Human).